The chain runs to 990 residues: A-type ATP synthase subunit B (990 aa).

The DOD-type homing endonuclease domain maps to 491-614; that stretch reads VAGLIASDGS…LQLLLKRLGV (124 aa).

This sequence belongs to the ATPase alpha/beta chains family. Has multiple subunits with at least A(3), B(3), C, D, E, F, H, I and proteolipid K(x). In terms of processing, this protein undergoes a protein self splicing that involves a post-translational excision of the VDE intervening region (intein) followed by peptide ligation.

The protein resides in the cell membrane. In terms of biological role, component of the A-type ATP synthase that produces ATP from ADP in the presence of a proton gradient across the membrane. The B chain is a regulatory subunit. The protein is A-type ATP synthase subunit B of Methanopyrus kandleri (strain AV19 / DSM 6324 / JCM 9639 / NBRC 100938).